A 54-amino-acid polypeptide reads, in one-letter code: UPF0391 membrane protein RC1_1636 (54 aa).

2 helical membrane-spanning segments follow: residues 3-23 and 30-50; these read YWALIFFVVALVAGVLGFGGI and IAQILFFIFLVIFVVSLIMGL.

This sequence belongs to the UPF0391 family.

Its subcellular location is the cell membrane. The chain is UPF0391 membrane protein RC1_1636 from Rhodospirillum centenum (strain ATCC 51521 / SW).